A 445-amino-acid chain; its full sequence is MTRDKKHYICSNCANISHKWSGQCFDCGVWGSIVEEIISTNKSIITGSKQTFDKLSCDVSEPLRISTPISELNRVLGGGLVLGSAILIGGEPGIGKSTLLLQLTASNFESKMRCLYITGEESLDQIKLRAIRLNITNYNTAILAATNLEDIIASIDDNNNNIDLVVIDSIQTITTKELSSPPGTVSQIRTCANELVNYSKQNNIIILLSCHVTKDGQIAGPKILEHLVDTVLYFEGDHNNHFRILRSYKNRFGSIGEIGVFEMSSSGILEVTNHSELFLMKREHNVVGTSIFAGVEGSRPLLMEVQALIVPSNMLTPKRSAVGWDANRLSMILAVLSSRIGLNLANYEIYLSIAGGLKITDPASDLAVAASLISAATSIPLPEHSVFFGEISLSGEIRKTAKAETRIKEAVKLGFNKVICSKLENLTYDFICSCTHLQDLKEIIK.

A C4-type zinc finger spans residues 10 to 27 (CSNCANISHKWSGQCFDC). ATP is bound at residue 90 to 97 (GEPGIGKS). The RadA KNRFG motif motif lies at 249–253 (KNRFG). The interval 348–445 (EIYLSIAGGL…HLQDLKEIIK (98 aa)) is lon-protease-like.

The protein belongs to the RecA family. RadA subfamily.

Its function is as follows. DNA-dependent ATPase involved in processing of recombination intermediates, plays a role in repairing DNA breaks. Stimulates the branch migration of RecA-mediated strand transfer reactions, allowing the 3' invading strand to extend heteroduplex DNA faster. Binds ssDNA in the presence of ADP but not other nucleotides, has ATPase activity that is stimulated by ssDNA and various branched DNA structures, but inhibited by SSB. Does not have RecA's homology-searching function. The protein is DNA repair protein RadA of Rickettsia typhi (strain ATCC VR-144 / Wilmington).